The following is a 186-amino-acid chain: ATP synthase subunit delta (186 aa).

It belongs to the ATPase delta chain family. As to quaternary structure, F-type ATPases have 2 components, F(1) - the catalytic core - and F(0) - the membrane proton channel. F(1) has five subunits: alpha(3), beta(3), gamma(1), delta(1), epsilon(1). F(0) has three main subunits: a(1), b(2) and c(10-14). The alpha and beta chains form an alternating ring which encloses part of the gamma chain. F(1) is attached to F(0) by a central stalk formed by the gamma and epsilon chains, while a peripheral stalk is formed by the delta and b chains.

The protein resides in the cell inner membrane. Its function is as follows. F(1)F(0) ATP synthase produces ATP from ADP in the presence of a proton or sodium gradient. F-type ATPases consist of two structural domains, F(1) containing the extramembraneous catalytic core and F(0) containing the membrane proton channel, linked together by a central stalk and a peripheral stalk. During catalysis, ATP synthesis in the catalytic domain of F(1) is coupled via a rotary mechanism of the central stalk subunits to proton translocation. Functionally, this protein is part of the stalk that links CF(0) to CF(1). It either transmits conformational changes from CF(0) to CF(1) or is implicated in proton conduction. The chain is ATP synthase subunit delta from Bacteroides thetaiotaomicron (strain ATCC 29148 / DSM 2079 / JCM 5827 / CCUG 10774 / NCTC 10582 / VPI-5482 / E50).